Consider the following 252-residue polypeptide: Gamma carbonic anhydrase-like 1, mitochondrial (252 aa).

A mitochondrion-targeting transit peptide spans 1-29 (MATSIARLSRRGVTSNLIRRCFAAEAALA). Substrate contacts are provided by residues 99–101 (RGD) and 114–115 (QE). A Zn(2+)-binding site is contributed by histidine 120. Substrate is bound by residues arginine 148, glutamine 160, and tyrosine 227.

This sequence belongs to the gamma-class carbonic anhydrase family. Component of the mitochondrial oxidoreductase respiratory chain complex I; element of the extra matrix-exposed domain, which is attached to the membrane arm of this complex. Interacts with GAMMACA2.

Its subcellular location is the mitochondrion membrane. Functionally, involved in complex I assembly in mitochondria and respiration. This chain is Gamma carbonic anhydrase-like 1, mitochondrial (GAMMACAL1), found in Arabidopsis thaliana (Mouse-ear cress).